The following is a 178-amino-acid chain: Large ribosomal subunit protein bL25 (178 aa).

Belongs to the bacterial ribosomal protein bL25 family. CTC subfamily. In terms of assembly, part of the 50S ribosomal subunit; part of the 5S rRNA/L5/L18/L25 subcomplex. Contacts the 5S rRNA. Binds to the 5S rRNA independently of L5 and L18.

In terms of biological role, this is one of the proteins that binds to the 5S RNA in the ribosome where it forms part of the central protuberance. The protein is Large ribosomal subunit protein bL25 of Helicobacter pylori (strain Shi470).